Here is a 240-residue protein sequence, read N- to C-terminus: Cilia- and flagella-associated protein 77 (240 aa).

The protein belongs to the CFAP77 family.

It localises to the cytoplasm. The protein localises to the cytoskeleton. The protein resides in the cilium axoneme. Its subcellular location is the flagellum axoneme. In terms of biological role, microtubule inner protein (MIP) part of the dynein-decorated doublet microtubules (DMTs) in cilia axoneme, which is required for motile cilia beating. The protein is Cilia- and flagella-associated protein 77 of Danio rerio (Zebrafish).